Here is a 941-residue protein sequence, read N- to C-terminus: Probable lipoxygenase 8, chloroplastic (941 aa).

Disordered regions lie at residues 1–22 (MLRP…SSSS) and 45–68 (LIAG…VVRC). A chloroplast-targeting transit peptide spans 1 to 67 (MLRPQLNPSS…QQGRQRVVVR (67 aa)). The region spanning 100-236 (AVATIKVTVE…SIDEGTPGKR (137 aa)) is the PLAT domain. One can recognise a Lipoxygenase domain in the interval 242–941 (AYLPGQTPAG…GMGIPNSTSI (700 aa)). Disordered stretches follow at residues 255 to 274 (YREE…READ) and 288 to 331 (NPDS…RKGN). Residues 319–331 (SKKDPKSETRKGN) are compositionally biased toward basic and acidic residues. Fe cation is bound by residues His-598, His-603, His-790, Asn-794, and Ile-941.

This sequence belongs to the lipoxygenase family. Fe cation serves as cofactor.

The protein resides in the plastid. Its subcellular location is the chloroplast. The enzyme catalyses (9Z,12Z)-octadecadienoate + O2 = (13S)-hydroperoxy-(9Z,11E)-octadecadienoate. It catalyses the reaction (9Z,12Z,15Z)-octadecatrienoate + O2 = (13S)-hydroperoxy-(9Z,11E,15Z)-octadecatrienoate. It functions in the pathway lipid metabolism; oxylipin biosynthesis. Plant lipoxygenase may be involved in a number of diverse aspects of plant physiology including growth and development, pest resistance, and senescence or responses to wounding. It catalyzes the hydroperoxidation of lipids containing a cis,cis-1,4-pentadiene structure. The polypeptide is Probable lipoxygenase 8, chloroplastic (CM-LOX2) (Oryza sativa subsp. japonica (Rice)).